The sequence spans 434 residues: Xylose isomerase (434 aa).

Active-site residues include H99 and D102. Mg(2+) contacts are provided by E230, E266, H269, D294, D305, D307, and D337.

The protein belongs to the xylose isomerase family. As to quaternary structure, homotetramer. It depends on Mg(2+) as a cofactor.

It localises to the cytoplasm. The catalysed reaction is alpha-D-xylose = alpha-D-xylulofuranose. The chain is Xylose isomerase from Dinoroseobacter shibae (strain DSM 16493 / NCIMB 14021 / DFL 12).